A 312-amino-acid polypeptide reads, in one-letter code: Methionyl-tRNA formyltransferase (312 aa).

Position 109 to 112 (109 to 112 (SLLP)) interacts with (6S)-5,6,7,8-tetrahydrofolate.

Belongs to the Fmt family.

The enzyme catalyses L-methionyl-tRNA(fMet) + (6R)-10-formyltetrahydrofolate = N-formyl-L-methionyl-tRNA(fMet) + (6S)-5,6,7,8-tetrahydrofolate + H(+). Attaches a formyl group to the free amino group of methionyl-tRNA(fMet). The formyl group appears to play a dual role in the initiator identity of N-formylmethionyl-tRNA by promoting its recognition by IF2 and preventing the misappropriation of this tRNA by the elongation apparatus. The sequence is that of Methionyl-tRNA formyltransferase from Listeria monocytogenes serotype 4b (strain CLIP80459).